Consider the following 120-residue polypeptide: NAD(P)H-quinone oxidoreductase subunit 3, chloroplastic (120 aa).

The next 3 membrane-spanning stretches (helical) occupy residues 2-22 (FLLY…VIPI), 64-84 (MFAL…PWAL), and 88-108 (ILGV…VLGL).

It belongs to the complex I subunit 3 family. As to quaternary structure, NDH is composed of at least 16 different subunits, 5 of which are encoded in the nucleus.

The protein localises to the plastid. It localises to the chloroplast thylakoid membrane. The catalysed reaction is a plastoquinone + NADH + (n+1) H(+)(in) = a plastoquinol + NAD(+) + n H(+)(out). It carries out the reaction a plastoquinone + NADPH + (n+1) H(+)(in) = a plastoquinol + NADP(+) + n H(+)(out). Its function is as follows. NDH shuttles electrons from NAD(P)H:plastoquinone, via FMN and iron-sulfur (Fe-S) centers, to quinones in the photosynthetic chain and possibly in a chloroplast respiratory chain. The immediate electron acceptor for the enzyme in this species is believed to be plastoquinone. Couples the redox reaction to proton translocation, and thus conserves the redox energy in a proton gradient. In Oenothera biennis (German evening primrose), this protein is NAD(P)H-quinone oxidoreductase subunit 3, chloroplastic.